The chain runs to 216 residues: Large ribosomal subunit protein uL3 (216 aa).

Gln-157 carries the post-translational modification N5-methylglutamine.

The protein belongs to the universal ribosomal protein uL3 family. In terms of assembly, part of the 50S ribosomal subunit. Forms a cluster with proteins L14 and L19. In terms of processing, methylated by PrmB.

Functionally, one of the primary rRNA binding proteins, it binds directly near the 3'-end of the 23S rRNA, where it nucleates assembly of the 50S subunit. The protein is Large ribosomal subunit protein uL3 of Xanthomonas campestris pv. campestris (strain 8004).